The sequence spans 433 residues: Serine hydroxymethyltransferase (433 aa).

Residues leucine 133 and 137–139 contribute to the (6S)-5,6,7,8-tetrahydrofolate site; that span reads GHL. The residue at position 242 (lysine 242) is an N6-(pyridoxal phosphate)lysine. (6S)-5,6,7,8-tetrahydrofolate is bound at residue 366-368; sequence SPF.

It belongs to the SHMT family. As to quaternary structure, homodimer. The cofactor is pyridoxal 5'-phosphate.

Its subcellular location is the cytoplasm. It catalyses the reaction (6R)-5,10-methylene-5,6,7,8-tetrahydrofolate + glycine + H2O = (6S)-5,6,7,8-tetrahydrofolate + L-serine. The protein operates within one-carbon metabolism; tetrahydrofolate interconversion. It functions in the pathway amino-acid biosynthesis; glycine biosynthesis; glycine from L-serine: step 1/1. In terms of biological role, catalyzes the reversible interconversion of serine and glycine with tetrahydrofolate (THF) serving as the one-carbon carrier. This reaction serves as the major source of one-carbon groups required for the biosynthesis of purines, thymidylate, methionine, and other important biomolecules. Also exhibits THF-independent aldolase activity toward beta-hydroxyamino acids, producing glycine and aldehydes, via a retro-aldol mechanism. The sequence is that of Serine hydroxymethyltransferase from Beijerinckia indica subsp. indica (strain ATCC 9039 / DSM 1715 / NCIMB 8712).